The primary structure comprises 889 residues: Chitin synthase I (889 aa).

N-linked (GlcNAc...) asparagine glycosylation occurs at Asn-43. The tract at residues Gly-94–Ala-138 is disordered. Over residues Tyr-126–Pro-137 the composition is skewed to polar residues. A glycan (N-linked (GlcNAc...) asparagine) is linked at Asn-199. The next 9 helical transmembrane spans lie at Ser-431–Leu-451, Arg-530–Phe-550, Leu-560–Ile-580, Ile-606–Ser-626, Met-641–Val-661, Thr-687–Phe-707, Phe-716–Cys-736, Gly-815–Ala-835, and Ile-861–Leu-881.

The protein belongs to the chitin synthase family. Class I subfamily. In terms of tissue distribution, expressed in hyphal bodies.

Its subcellular location is the cell membrane. The catalysed reaction is [(1-&gt;4)-N-acetyl-beta-D-glucosaminyl](n) + UDP-N-acetyl-alpha-D-glucosamine = [(1-&gt;4)-N-acetyl-beta-D-glucosaminyl](n+1) + UDP + H(+). Functionally, polymerizes chitin, a structural polymer of the cell wall and septum, by transferring the sugar moiety of UDP-GlcNAc to the non-reducing end of the growing chitin polymer. Contributes to the production of conidia and the ability of fungal conidia to germinate. Not involved in fungal stress tolerances. The sequence is that of Chitin synthase I from Metarhizium acridum (strain CQMa 102).